Consider the following 230-residue polypeptide: 3,4-dihydroxy-2-butanone 4-phosphate synthase (230 aa).

Residues 42 to 43, D47, 155 to 159, and E179 each bind D-ribulose 5-phosphate; these read RE and RRGHT. E43 provides a ligand contact to Mg(2+). H158 contacts Mg(2+).

This sequence belongs to the DHBP synthase family. In terms of assembly, homodimer. Mg(2+) is required as a cofactor. Requires Mn(2+) as cofactor.

It catalyses the reaction D-ribulose 5-phosphate = (2S)-2-hydroxy-3-oxobutyl phosphate + formate + H(+). The protein operates within cofactor biosynthesis; riboflavin biosynthesis; 2-hydroxy-3-oxobutyl phosphate from D-ribulose 5-phosphate: step 1/1. In terms of biological role, catalyzes the conversion of D-ribulose 5-phosphate to formate and 3,4-dihydroxy-2-butanone 4-phosphate. The protein is 3,4-dihydroxy-2-butanone 4-phosphate synthase of Bordetella bronchiseptica (strain ATCC BAA-588 / NCTC 13252 / RB50) (Alcaligenes bronchisepticus).